A 414-amino-acid polypeptide reads, in one-letter code: Histidine--tRNA ligase (414 aa).

Belongs to the class-II aminoacyl-tRNA synthetase family. In terms of assembly, homodimer.

Its subcellular location is the cytoplasm. It carries out the reaction tRNA(His) + L-histidine + ATP = L-histidyl-tRNA(His) + AMP + diphosphate + H(+). The protein is Histidine--tRNA ligase (hisS) of Mycoplasma pneumoniae (strain ATCC 29342 / M129 / Subtype 1) (Mycoplasmoides pneumoniae).